The primary structure comprises 113 residues: Prefoldin subunit beta (113 aa).

It belongs to the prefoldin subunit beta family. Heterohexamer of two alpha and four beta subunits.

The protein localises to the cytoplasm. Molecular chaperone capable of stabilizing a range of proteins. Seems to fulfill an ATP-independent, HSP70-like function in archaeal de novo protein folding. This is Prefoldin subunit beta from Methanococcus maripaludis (strain C7 / ATCC BAA-1331).